The following is a 557-amino-acid chain: Dihydroxy-acid dehydratase (557 aa).

Cys49 lines the [2Fe-2S] cluster pocket. Asp81 is a binding site for Mg(2+). Cys122 lines the [2Fe-2S] cluster pocket. Residues Asp123 and Lys124 each contribute to the Mg(2+) site. Lys124 carries the post-translational modification N6-carboxylysine. Cys194 lines the [2Fe-2S] cluster pocket. Glu446 lines the Mg(2+) pocket. Residue Ser472 is the Proton acceptor of the active site.

This sequence belongs to the IlvD/Edd family. As to quaternary structure, homodimer. [2Fe-2S] cluster serves as cofactor. Requires Mg(2+) as cofactor.

It catalyses the reaction (2R)-2,3-dihydroxy-3-methylbutanoate = 3-methyl-2-oxobutanoate + H2O. The enzyme catalyses (2R,3R)-2,3-dihydroxy-3-methylpentanoate = (S)-3-methyl-2-oxopentanoate + H2O. It functions in the pathway amino-acid biosynthesis; L-isoleucine biosynthesis; L-isoleucine from 2-oxobutanoate: step 3/4. The protein operates within amino-acid biosynthesis; L-valine biosynthesis; L-valine from pyruvate: step 3/4. Functionally, functions in the biosynthesis of branched-chain amino acids. Catalyzes the dehydration of (2R,3R)-2,3-dihydroxy-3-methylpentanoate (2,3-dihydroxy-3-methylvalerate) into 2-oxo-3-methylpentanoate (2-oxo-3-methylvalerate) and of (2R)-2,3-dihydroxy-3-methylbutanoate (2,3-dihydroxyisovalerate) into 2-oxo-3-methylbutanoate (2-oxoisovalerate), the penultimate precursor to L-isoleucine and L-valine, respectively. This Prochlorococcus marinus (strain AS9601) protein is Dihydroxy-acid dehydratase.